Reading from the N-terminus, the 616-residue chain is MCGIIGYSGPRPAAEVLLKGLERLEYRGYDSAGIAVVTDKAYIESVKKSGKLNVLKTCLERRTTPIVGSTGIGHTRWATHGEPSDRNAHPHMDTEQSLAIVHNGIIENSDVLKRELLASGKSFTSETDTEVVAHLLSDAFKKTQDLVQAFVEVTQRLEGAFAVVAIHKDQPNTIVAAKNNSPLLLGFGQGENFLASDIAAFAEYTQRVANIDQERIVALSGDSVYITDFAGHPVDYEVHTVSWHPASVDSSGWSSFMLKEIFEEPQAVENTLKGRTEDGTVILPECDHIRDDLLAIDRVVLVGCGTAAYAAMTASYSIEAWAGLPVSVELSHEFRYREPVLNSKTLAVFISQSGETMDSLMAVRYARQAGVKTISVCNVMDSSIPKESHAVIYTKAGPEVAVASTKSFVCQIVVLYLLALYLGQLRGFRSIFPRQKAVCELNRLPVKLKQVLEIYESVRQLAHWMSDSRSILFLGRHAGYPIALEAALKLKELAYIHAEGFAAGELKHGPIALIEPGQPVFVIVPSPVGSPILHAKVISNIREIKSRGARIIAIAAEGDSAVLPHTDSVLRIPLTRYSFEPLLSIVPLQIFALELAADKGFDVDRPRNLAKSVTVE.

The active-site Nucleophile; for GATase activity is the Cys2. Residues 2-222 form the Glutamine amidotransferase type-2 domain; sequence CGIIGYSGPR…QERIVALSGD (221 aa). The interval 70–89 is disordered; it reads TGIGHTRWATHGEPSDRNAH. 2 consecutive SIS domains span residues 289-428 and 461-606; these read IRDD…LRGF and LAHW…VDRP. Catalysis depends on Lys611, which acts as the For Fru-6P isomerization activity.

As to quaternary structure, homodimer.

The protein localises to the cytoplasm. It catalyses the reaction D-fructose 6-phosphate + L-glutamine = D-glucosamine 6-phosphate + L-glutamate. In terms of biological role, catalyzes the first step in hexosamine metabolism, converting fructose-6P into glucosamine-6P using glutamine as a nitrogen source. In Tropheryma whipplei (strain Twist) (Whipple's bacillus), this protein is Glutamine--fructose-6-phosphate aminotransferase [isomerizing].